The chain runs to 158 residues: Small ribosomal subunit protein uS7 (158 aa).

This sequence belongs to the universal ribosomal protein uS7 family. In terms of assembly, part of the 30S ribosomal subunit. Contacts proteins S9 and S11.

Its function is as follows. One of the primary rRNA binding proteins, it binds directly to 16S rRNA where it nucleates assembly of the head domain of the 30S subunit. Is located at the subunit interface close to the decoding center, probably blocks exit of the E-site tRNA. The polypeptide is Small ribosomal subunit protein uS7 (Granulibacter bethesdensis (strain ATCC BAA-1260 / CGDNIH1)).